The following is a 565-amino-acid chain: NAD-dependent malic enzyme (565 aa).

The active-site Proton donor is the tyrosine 104. Arginine 157 provides a ligand contact to NAD(+). Lysine 175 (proton acceptor) is an active-site residue. Residues glutamate 246, aspartate 247, and aspartate 270 each coordinate a divalent metal cation. NAD(+) contacts are provided by aspartate 270 and asparagine 418.

It belongs to the malic enzymes family. Homotetramer. Mg(2+) is required as a cofactor. Mn(2+) serves as cofactor.

It carries out the reaction (S)-malate + NAD(+) = pyruvate + CO2 + NADH. It catalyses the reaction oxaloacetate + H(+) = pyruvate + CO2. This chain is NAD-dependent malic enzyme, found in Salmonella heidelberg (strain SL476).